Consider the following 720-residue polypeptide: Nucleoporin 88 (720 aa).

The stretch at 584 to 611 (LALCREDRKSLTEAAERLADKYEDAKYR) forms a coiled coil.

As to expression, widely expressed. Higher levels of expression are detected in highly proliferative frontal regions of the embryo, e.g. brain, eye and anterior trunk.

The protein localises to the nucleus. It localises to the nuclear pore complex. In terms of biological role, component of the nuclear pore complex. In Danio rerio (Zebrafish), this protein is Nucleoporin 88.